The sequence spans 233 residues: 2-phytyl-1,4-naphtoquinone methyltransferase (233 aa).

The protein belongs to the class I-like SAM-binding methyltransferase superfamily. MenG/UbiE family.

The enzyme catalyses demethylphylloquinol + S-adenosyl-L-methionine = phylloquinol + S-adenosyl-L-homocysteine + H(+). The protein operates within cofactor biosynthesis; phylloquinone biosynthesis. Its function is as follows. Methyltransferase required for the conversion of 2-phytyl-1,4-beta-naphthoquinol to phylloquinol. The chain is 2-phytyl-1,4-naphtoquinone methyltransferase from Synechococcus elongatus (strain ATCC 33912 / PCC 7942 / FACHB-805) (Anacystis nidulans R2).